The sequence spans 929 residues: Valine--tRNA ligase (929 aa).

A 'HIGH' region motif is present at residues 59–69; sequence PNVTGSLHMGH. Positions 557–561 match the 'KMSKS' region motif; sequence KMSKS. Lys560 contacts ATP. Residues 862 to 929 adopt a coiled-coil conformation; that stretch reads LVDLDALRGR…LARQRLSDLG (68 aa).

It belongs to the class-I aminoacyl-tRNA synthetase family. ValS type 1 subfamily. As to quaternary structure, monomer.

It localises to the cytoplasm. The enzyme catalyses tRNA(Val) + L-valine + ATP = L-valyl-tRNA(Val) + AMP + diphosphate. Functionally, catalyzes the attachment of valine to tRNA(Val). As ValRS can inadvertently accommodate and process structurally similar amino acids such as threonine, to avoid such errors, it has a 'posttransfer' editing activity that hydrolyzes mischarged Thr-tRNA(Val) in a tRNA-dependent manner. This is Valine--tRNA ligase from Prochlorococcus marinus (strain MIT 9313).